The chain runs to 799 residues: ATP synthase subunit alpha (799 aa).

Residues 1 to 549 (MTDNKNHSLI…EEVSLKPTTE (549 aa)) are ATP synthase alpha chain. 170-177 (GDRQTGKT) contacts ATP. The tract at residues 550–799 (TSEAVQIEEK…KGPSGFTYLK (250 aa)) is unknown.

Belongs to the ATPase alpha/beta chains family. F-type ATPases have 2 components, CF(1) - the catalytic core - and CF(0) - the membrane proton channel. CF(1) has five subunits: alpha(3), beta(3), gamma(1), delta(1), epsilon(1). CF(0) has three main subunits: a(1), b(2) and c(9-12). The alpha and beta chains form an alternating ring which encloses part of the gamma chain. CF(1) is attached to CF(0) by a central stalk formed by the gamma and epsilon chains, while a peripheral stalk is formed by the delta and b chains.

The protein resides in the cell membrane. It carries out the reaction ATP + H2O + 4 H(+)(in) = ADP + phosphate + 5 H(+)(out). Produces ATP from ADP in the presence of a proton gradient across the membrane. The alpha chain is a regulatory subunit. This chain is ATP synthase subunit alpha (atpA), found in Ureaplasma parvum serovar 3 (strain ATCC 27815 / 27 / NCTC 11736).